Here is a 288-residue protein sequence, read N- to C-terminus: Keratin-associated protein 5-4 (288 aa).

Repeat copies occupy residues 49–52 (CCVP), 55–58 (CCKP), 61–64 (CCVP), 201–204 (CCKP), 220–223 (CCKP), 239–242 (CCKP), 249–252 (CCKP), 268–271 (CCNP), and 278–281 (CCVP). The tract at residues 49–281 (CCVPICCCKP…CCSQSSCCVP (233 aa)) is 9 X 4 AA repeats of C-C-X-P.

This sequence belongs to the KRTAP type 5 family. In terms of assembly, interacts with hair keratins. Restricted to hair root, not detected in any other tissues.

In the hair cortex, hair keratin intermediate filaments are embedded in an interfilamentous matrix, consisting of hair keratin-associated protein (KRTAP), which are essential for the formation of a rigid and resistant hair shaft through their extensive disulfide bond cross-linking with abundant cysteine residues of hair keratins. The matrix proteins include the high-sulfur and high-glycine-tyrosine keratins. The polypeptide is Keratin-associated protein 5-4 (KRTAP5-4) (Homo sapiens (Human)).